Reading from the N-terminus, the 476-residue chain is Cytochrome c oxidase subunit 1 (476 aa).

A helical membrane pass occupies residues Leu19–Leu39. Glu42 is a Ca(2+) binding site. 8 helical membrane passes run Met61–Gly81, Ile105–Phe125, Leu144–Ile164, Ile194–Met214, Leu240–Ile260, Met278–Tyr298, Phe309–Leu329, and Leu345–Gly365. His66 serves as a coordination point for Fe(II)-heme a. Cu cation is bound at residue His246. The segment at residues His246–Tyr250 is a cross-link (1'-histidyl-3'-tyrosine (His-Tyr)). O2 is bound at residue Tyr250. The Cu cation site is built by His295 and His296. Mg(2+)-binding residues include His374 and Asp375. 2 helical membrane passes run Val379–Val399 and Thr415–Met435. His382 serves as a coordination point for heme a3. His384 serves as a coordination point for Fe(II)-heme a. Ca(2+) is bound at residue Pro448. The chain crosses the membrane as a helical span at residues Asn455–Phe475.

Belongs to the heme-copper respiratory oxidase family. Component of the cytochrome c oxidase (complex IV, CIV), a multisubunit enzyme composed of a catalytic core of 3 subunits and several supernumerary subunits. The complex exists as a monomer or a dimer and forms supercomplexes (SCs) in the inner mitochondrial membrane with ubiquinol-cytochrome c oxidoreductase (cytochrome b-c1 complex, complex III, CIII). The cofactor is heme. It depends on Cu cation as a cofactor.

The protein resides in the mitochondrion inner membrane. It catalyses the reaction 4 Fe(II)-[cytochrome c] + O2 + 8 H(+)(in) = 4 Fe(III)-[cytochrome c] + 2 H2O + 4 H(+)(out). It functions in the pathway energy metabolism; oxidative phosphorylation. In terms of biological role, component of the cytochrome c oxidase, the last enzyme in the mitochondrial electron transport chain which drives oxidative phosphorylation. The respiratory chain contains 3 multisubunit complexes succinate dehydrogenase (complex II, CII), ubiquinol-cytochrome c oxidoreductase (cytochrome b-c1 complex, complex III, CIII) and cytochrome c oxidase (complex IV, CIV), that cooperate to transfer electrons derived from NADH and succinate to molecular oxygen, creating an electrochemical gradient over the inner membrane that drives transmembrane transport and the ATP synthase. Cytochrome c oxidase is the component of the respiratory chain that catalyzes the reduction of oxygen to water. Electrons originating from reduced cytochrome c in the intermembrane space (IMS) are transferred via the dinuclear copper A center (CU(A)) of subunit 2 and heme A of subunit 1 to the active site in subunit 1, a binuclear center (BNC) formed by heme A3 and copper B (CU(B)). The BNC reduces molecular oxygen to 2 water molecules using 4 electrons from cytochrome c in the IMS and 4 protons from the mitochondrial matrix. In Plasmodium berghei, this protein is Cytochrome c oxidase subunit 1 (COI).